We begin with the raw amino-acid sequence, 393 residues long: F-box protein KIB4 (393 aa).

In terms of domain architecture, F-box spans 12–59 (AKQPILVLDLVRLVLERLSFVDFHRARCVSSVWYSASKSCIGGTNPTA).

It localises to the cytoplasm. Its subcellular location is the nucleus. It is found in the nucleolus. Its function is as follows. Component of SCF(ASK-cullin-F-box) E3 ubiquitin ligase complexes, which may mediate the ubiquitination and subsequent proteasomal degradation of target proteins. Required for brassinosteroid (BR) signal transduction. Mediates ASK7/BIN2/SK21 inactivation both by competing with substrate binding (e.g. BZR1) and by promoting its ubiquitination and subsequent proteasomal degradation. The sequence is that of F-box protein KIB4 from Arabidopsis thaliana (Mouse-ear cress).